The chain runs to 302 residues: Taste receptor type 2 member 104 (302 aa).

Over 1–7 the chain is Extracellular; sequence MLSMLES. Residues 8–28 form a helical membrane-spanning segment; sequence ILLSVATSEAMLGILGNIFIV. Residues 29–43 are Cytoplasmic-facing; sequence LVNCTNWVRNKKLSK. Residues 44-64 form a helical membrane-spanning segment; it reads INFILTGLAISRVFTIWIITL. The Extracellular segment spans residues 65–87; sequence DAYTKVFFLTTLMPSNLHECISY. A helical membrane pass occupies residues 88-108; sequence IWVIINHLSVWFATSLSIFYF. Residues 109-128 lie on the Cytoplasmic side of the membrane; that stretch reads LKIANFSHYIFLWLKRRADK. Residues 129–149 form a helical membrane-spanning segment; that stretch reads VFVFLIGYLIITWLASFPLAV. At 150 to 182 the chain is on the extracellular side; that stretch reads TVIKNIKVHHNNTSWLIQLEKRELLINYVFANM. N-linked (GlcNAc...) asparagine glycans are attached at residues asparagine 160 and asparagine 161. The chain crosses the membrane as a helical span at residues 183 to 203; it reads GPISLFMVAVFTCFLLTISLW. Topologically, residues 204–233 are cytoplasmic; it reads RHRRRMQSTGSKFRDLNTEVHVKAMKVLIS. The helical transmembrane segment at 234 to 254 threads the bilayer; it reads FIILFILYFMGVLIETLCLFL. Over 255–257 the chain is Extracellular; sequence TEN. The helical transmembrane segment at 258-278 threads the bilayer; that stretch reads ILLFIFGFTLSSTYPCCHSFI. At 279-302 the chain is on the cytoplasmic side; that stretch reads LILTSRELKQASMRALQRLKCCET.

It belongs to the G-protein coupled receptor T2R family.

It is found in the membrane. Functionally, putative taste receptor which may play a role in the perception of bitterness. The sequence is that of Taste receptor type 2 member 104 from Rattus norvegicus (Rat).